The chain runs to 528 residues: Serine/threonine-protein kinase akt-2 (528 aa).

One can recognise a PH domain in the interval 12 to 115 (DIVIESWLHK…WIEAIQAVSS (104 aa)). A disordered region spans residues 121 to 153 (ENAGNTSMQEEDTNGNPSGESDVNMDATSTRSD). Polar residues predominate over residues 123 to 153 (AGNTSMQEEDTNGNPSGESDVNMDATSTRSD). One can recognise a Protein kinase domain in the interval 180–437 (FDFLKVLGQG…AREVSRAEFF (258 aa)). Residues 186-194 (LGQGTFGKV) and lysine 209 contribute to the ATP site. Aspartate 303 serves as the catalytic Proton acceptor. Positions 438 to 515 (KDVDWEATLR…YYVSGSLERS (78 aa)) constitute an AGC-kinase C-terminal domain.

This sequence belongs to the protein kinase superfamily. AGC Ser/Thr protein kinase family. RAC subfamily. In terms of assembly, interacts with pdk-1, sgk-1, akt-1 and daf-16. Part of a complex containing sgk-1, akt-1 and akt-2. Mg(2+) is required as a cofactor. Expressed in neurons, muscle cells of the pharynx, rectal gland cells, and spermatheca.

It carries out the reaction L-seryl-[protein] + ATP = O-phospho-L-seryl-[protein] + ADP + H(+). The enzyme catalyses L-threonyl-[protein] + ATP = O-phospho-L-threonyl-[protein] + ADP + H(+). Its activity is regulated as follows. Phosphorylated and activated by pdk-1. Functionally, acts downstream of PI3 kinase age-1 and kinase pdk-1 in the daf-2/insulin receptor-like transduction pathway. Essential role in regulating developmental arrest at the dauer stage. Phosphorylates Forkhead-related daf-16 and the longevity-promoting skn-1 transcription factors, which inhibits their entry into the nucleus and antagonizes their functions. Role in immune function and pathogen resistance. Downstream of age-1 and together with akt-1 and sgk-1, promotes cell survival during embryonic development. Plays a role in maintaining the gonadal basement membrane through antagonizing akt-1 activity. The polypeptide is Serine/threonine-protein kinase akt-2 (Caenorhabditis elegans).